The following is a 380-amino-acid chain: Chaperone protein DnaJ (380 aa).

The region spanning 5-69 (DFYEVLGVGR…QKKAAYDQYG (65 aa)) is the J domain. The CR-type zinc finger occupies 135–213 (GCSKEIRVPT…CHGQGRVEKT (79 aa)). The Zn(2+) site is built by C148, C151, C165, C168, C187, C190, C201, and C204. 4 CXXCXGXG motif repeats span residues 148-155 (CDSCDGSG), 165-172 (CGTCHGQG), 187-194 (CPHCHGRG), and 201-208 (CNSCHGQG).

This sequence belongs to the DnaJ family. In terms of assembly, homodimer. It depends on Zn(2+) as a cofactor.

Its subcellular location is the cytoplasm. In terms of biological role, participates actively in the response to hyperosmotic and heat shock by preventing the aggregation of stress-denatured proteins and by disaggregating proteins, also in an autonomous, DnaK-independent fashion. Unfolded proteins bind initially to DnaJ; upon interaction with the DnaJ-bound protein, DnaK hydrolyzes its bound ATP, resulting in the formation of a stable complex. GrpE releases ADP from DnaK; ATP binding to DnaK triggers the release of the substrate protein, thus completing the reaction cycle. Several rounds of ATP-dependent interactions between DnaJ, DnaK and GrpE are required for fully efficient folding. Also involved, together with DnaK and GrpE, in the DNA replication of plasmids through activation of initiation proteins. The sequence is that of Chaperone protein DnaJ from Photobacterium profundum (strain SS9).